The following is a 76-amino-acid chain: ATP synthase subunit c (76 aa).

The next 2 helical transmembrane spans lie at Leu13–Phe33 and Phe55–Ile75.

Belongs to the ATPase C chain family. F-type ATPases have 2 components, F(1) - the catalytic core - and F(0) - the membrane proton channel. F(1) has five subunits: alpha(3), beta(3), gamma(1), delta(1), epsilon(1). F(0) has three main subunits: a(1), b(2) and c(10-14). The alpha and beta chains form an alternating ring which encloses part of the gamma chain. F(1) is attached to F(0) by a central stalk formed by the gamma and epsilon chains, while a peripheral stalk is formed by the delta and b chains.

It is found in the cell membrane. Its function is as follows. F(1)F(0) ATP synthase produces ATP from ADP in the presence of a proton or sodium gradient. F-type ATPases consist of two structural domains, F(1) containing the extramembraneous catalytic core and F(0) containing the membrane proton channel, linked together by a central stalk and a peripheral stalk. During catalysis, ATP synthesis in the catalytic domain of F(1) is coupled via a rotary mechanism of the central stalk subunits to proton translocation. In terms of biological role, key component of the F(0) channel; it plays a direct role in translocation across the membrane. A homomeric c-ring of between 10-14 subunits forms the central stalk rotor element with the F(1) delta and epsilon subunits. The chain is ATP synthase subunit c from Bifidobacterium longum subsp. infantis (strain ATCC 15697 / DSM 20088 / JCM 1222 / NCTC 11817 / S12).